The primary structure comprises 447 residues: Phosphoglucosamine mutase (447 aa).

The active-site Phosphoserine intermediate is Ser-104. 4 residues coordinate Mg(2+): Ser-104, Asp-243, Asp-245, and Asp-247. Ser-104 is subject to Phosphoserine.

Belongs to the phosphohexose mutase family. The cofactor is Mg(2+). In terms of processing, activated by phosphorylation.

It catalyses the reaction alpha-D-glucosamine 1-phosphate = D-glucosamine 6-phosphate. Functionally, catalyzes the conversion of glucosamine-6-phosphate to glucosamine-1-phosphate. In Corynebacterium glutamicum (strain ATCC 13032 / DSM 20300 / JCM 1318 / BCRC 11384 / CCUG 27702 / LMG 3730 / NBRC 12168 / NCIMB 10025 / NRRL B-2784 / 534), this protein is Phosphoglucosamine mutase.